Here is a 437-residue protein sequence, read N- to C-terminus: 3-ketoacyl-CoA thiolase (437 aa).

Cysteine 99 acts as the Acyl-thioester intermediate in catalysis. Residues histidine 392 and cysteine 422 each act as proton acceptor in the active site.

This sequence belongs to the thiolase-like superfamily. Thiolase family. In terms of assembly, heterotetramer of two alpha chains (FadJ) and two beta chains (FadI).

The protein localises to the cytoplasm. It catalyses the reaction an acyl-CoA + acetyl-CoA = a 3-oxoacyl-CoA + CoA. Its pathway is lipid metabolism; fatty acid beta-oxidation. Functionally, catalyzes the final step of fatty acid oxidation in which acetyl-CoA is released and the CoA ester of a fatty acid two carbons shorter is formed. This chain is 3-ketoacyl-CoA thiolase, found in Pectobacterium atrosepticum (strain SCRI 1043 / ATCC BAA-672) (Erwinia carotovora subsp. atroseptica).